A 132-amino-acid polypeptide reads, in one-letter code: Small ribosomal subunit protein uS8 (132 aa).

This sequence belongs to the universal ribosomal protein uS8 family. Part of the 30S ribosomal subunit. Contacts proteins S5 and S12.

Its function is as follows. One of the primary rRNA binding proteins, it binds directly to 16S rRNA central domain where it helps coordinate assembly of the platform of the 30S subunit. In Renibacterium salmoninarum (strain ATCC 33209 / DSM 20767 / JCM 11484 / NBRC 15589 / NCIMB 2235), this protein is Small ribosomal subunit protein uS8.